Reading from the N-terminus, the 144-residue chain is Conopressin-conophysin (144 aa).

Positions 1–27 (MTRSALQMGRLTLVLCLLLQLVLVTQA) are cleaved as a signal peptide. Cysteine 28 and cysteine 33 form a disulfide bridge. Aspartate 36 bears the Aspartic acid 1-amide mark. Positions 37–44 (GERDVDGR) are excised as a propeptide. 7 disulfides stabilise this stretch: cysteine 50/cysteine 90, cysteine 53/cysteine 64, cysteine 58/cysteine 80, cysteine 65/cysteine 70, cysteine 97/cysteine 117, cysteine 109/cysteine 129, and cysteine 118/cysteine 123. A propeptide spanning residues 131–144 (KESKSGIRVGCQRS) is cleaved from the precursor.

Belongs to the vasopressin/oxytocin family. Expressed by the venom duct.

The protein localises to the secreted. The polypeptide is Conopressin-conophysin (Conus bayani (Bayan's cone)).